Consider the following 198-residue polypeptide: T-cell surface glycoprotein CD3 epsilon chain (198 aa).

A signal peptide spans Met-1–Gly-21. Topologically, residues Gln-22–Thr-120 are extracellular. In terms of domain architecture, Ig-like spans Ala-28–Lys-106. Cys-49 and Cys-90 are joined by a disulfide. Residues Val-121–Tyr-141 form a helical membrane-spanning segment. Topologically, residues Trp-142–Ile-198 are cytoplasmic. Positions Val-153 to Ile-198 are disordered. The NUMB-binding region stretch occupies residues Gln-166 to Arg-183. An ITAM domain is found at Glu-169–Arg-196. Residues Arg-170–Pro-177 form a proline-rich sequence region. Phosphotyrosine is present on residues Tyr-179 and Tyr-190.

As to quaternary structure, the TCR-CD3 complex is composed of a CD3D/CD3E and a CD3G/CD3E heterodimers that preferentially associate with TCRalpha and TCRbeta, respectively, to form TCRalpha/CD3E/CD3G and TCRbeta/CD3G/CD3E trimers. In turn, the hexamer interacts with CD3Z homodimer to form the TCR-CD3 complex. Alternatively, TCRalpha and TCRbeta can be replaced by TCRgamma and TCRdelta. Interacts with CD6. Interacts (via Proline-rich sequence) with NCK1; the interaction is ligand dependent but independent of tyrosine kinase activation. In terms of processing, phosphorylated on Tyr residues after T-cell receptor triggering by LCK in association with CD4/CD8.

It is found in the cell membrane. Functionally, part of the TCR-CD3 complex present on T-lymphocyte cell surface that plays an essential role in adaptive immune response. When antigen presenting cells (APCs) activate T-cell receptor (TCR), TCR-mediated signals are transmitted across the cell membrane by the CD3 chains CD3D, CD3E, CD3G and CD3Z. All CD3 chains contain immunoreceptor tyrosine-based activation motifs (ITAMs) in their cytoplasmic domain. Upon TCR engagement, these motifs become phosphorylated by Src family protein tyrosine kinases LCK and FYN, resulting in the activation of downstream signaling pathways. In addition of this role of signal transduction in T-cell activation, CD3E plays an essential role in correct T-cell development. Also participates in internalization and cell surface down-regulation of TCR-CD3 complexes via endocytosis sequences present in CD3E cytosolic region. In addition to its role as a TCR coreceptor, it serves as a receptor for ITPRIPL1. Ligand recognition inhibits T-cell activation by promoting interaction with NCK1, which prevents CD3E-ZAP70 interaction and blocks the ERK-NFkB signaling cascade and calcium influx. The chain is T-cell surface glycoprotein CD3 epsilon chain (CD3E) from Oryctolagus cuniculus (Rabbit).